Consider the following 177-residue polypeptide: MLDAFSRVVVTSDAKAAYVGGSDLQSLKSFINDGNKRLDAVNYIVSNASCIVSDAVSGMICENPGLIAPGGNCYTNRRMAACLRDGEIILRYVSYALLAGDSSVLDDRCLNGLKETYIALGVPTASSSRAVSIMKATATAFITNTASGRKVEVAAGDCQALQAEAASYFDKVGSSID.

Residues asparagine 35 and aspartate 39 each coordinate (2R,3E)-phycoerythrobilin. Positions 50, 54, and 61 each coordinate phycourobilin. (2R,3E)-phycoerythrobilin is bound by residues asparagine 72, 77–78 (RR), cysteine 82, and 84–85 (RD). Position 72 is an N4-methylasparagine (asparagine 72). 147–148 (SG) is a phycourobilin binding site. Position 158 (cysteine 158) interacts with (2R,3E)-phycoerythrobilin.

It belongs to the phycobiliprotein family. Heterododecamer of 6 alpha and 6 beta chains. The basic functional unit of phycobiliproteins is a ring-shaped hexamer formed from two back-to-back trimers contacting via the alpha chain subunits. The trimers are composed of alpha/beta subunit heterodimers arranged around a three-fold axis of symmetry. The phycoerythrins also contain a gamma subunit which is located in the center of the hexamer. In terms of processing, contains two covalently linked phycoerythrobilin chromophores and one covalently linked phycourobilin chromophore.

It is found in the plastid. The protein resides in the chloroplast thylakoid membrane. Light-harvesting photosynthetic tetrapyrrole chromophore-protein from the phycobiliprotein complex. This chain is R-phycoerythrin beta chain (cpeB), found in Griffithsia monilis (Red alga).